The sequence spans 263 residues: uncharacterized protein (263 aa).

The protein belongs to the AtsA family.

The protein resides in the plastid. The protein localises to the chloroplast. This is an uncharacterized protein from Porphyra purpurea (Red seaweed).